Here is a 370-residue protein sequence, read N- to C-terminus: MAASTMSVCSSDLSYGSRVCLPGSCDSCSDSWQVDDCPESCCEPPCCAPAPCLSLVCTPVSYVSSPCCRVTCEPSPCQSGCTSSCTPSCCQQSSCQLACCASSPCQQACCVPVCCKTVCCKPVYCVPVCSGDSSCCQQSSCQSACCTSSPCQQACCVPICCKPVCSGISSSCCQQSSCVSCVSSPCCQAVCEPSPCQSGCISSCTPSCCQQSSCKPACCTSSPCQQACCVPVCCKPVCCVPTCSDDSGSCCQPACCTSSQSQQGCCVPVCCKPVCCVPVCSGASTSCCQQSSCQPACCTTSCCRPSSSVSLLCRPVCRPACCVPVPSCCAPTSSCQASCCRPASCVSLLCRPACSRPACCGPTSTQKSSC.

The interval 36-363 (DCPESCCEPP…CSRPACCGPT (328 aa)) is 30 X 5 AA repeats of C-C-X(3). Repeat copies occupy residues 41-45 (CCEPP), 46-50 (CCAPA), 67-71 (CCRVT), 89-93 (CCQQS), 99-103 (CCASS), 109-113 (CCVPV), 114-118 (CCKTV), 119-123 (CCKPV), 135-139 (CCQQS), 145-149 (CCTSS), 155-159 (CCVPI), 160-164 (CCKPV), 172-176 (CCQQS), 186-190 (CCQAV), 208-212 (CCQQS), 218-222 (CCTSS), 228-232 (CCVPV), 233-237 (CCKPV), 238-242 (CCVPT), 250-254 (CCQPA), 255-259 (CCTSS), 265-269 (CCVPV), 270-274 (CCKPV), 275-279 (CCVPV), 287-291 (CCQQS), 297-301 (CCTTS), 302-306 (CCRPS), 321-325 (CCVPV), 339-343 (CCRPA), and 359-363 (CCGPT).

It belongs to the KRTAP type 10 family. As to quaternary structure, interacts with hair keratins. Restricted to a narrow region of the hair fiber cuticle, lying approximately 20 cell layers above the apex of the dermal papilla of the hair root; not detected in any other tissues.

Functionally, in the hair cortex, hair keratin intermediate filaments are embedded in an interfilamentous matrix, consisting of hair keratin-associated proteins (KRTAP), which are essential for the formation of a rigid and resistant hair shaft through their extensive disulfide bond cross-linking with abundant cysteine residues of hair keratins. The matrix proteins include the high-sulfur and high-glycine-tyrosine keratins. The protein is Keratin-associated protein 10-7 (KRTAP10-7) of Homo sapiens (Human).